The chain runs to 414 residues: ORC1-type DNA replication protein 11 (414 aa).

Residues 60 to 64 (VGKTA), Y207, and R219 contribute to the ATP site.

It belongs to the CDC6/cdc18 family.

In terms of biological role, involved in regulation of DNA replication. In Haloarcula marismortui (strain ATCC 43049 / DSM 3752 / JCM 8966 / VKM B-1809) (Halobacterium marismortui), this protein is ORC1-type DNA replication protein 11 (cdc6k).